Here is a 389-residue protein sequence, read N- to C-terminus: MGTNLSVPNPLGFFPDHQLDPAFKANSENPDWDLNPHKDNWPDAHKVGVGAFGPGFTPPHGGLLGWSPQAQGILTSVPAAPPPASTNRQSGRQPTPLSPPLRDTHPQAMQWNSTTFHQTLQDPRVRALYFPAGGSSSGTVSPAQNTVSAISSILSKTGDPVPNMENIASGLLGPLLVLQAGFFLLTKILTIPQSLDSWWTSLNFLGGTPVCLGQNSQSQISSHSPTCCPPICPGYRWMCLRRFIIFLCILLLCLIFLLVLLDYQGMLPVCPLIPGSSTTSTGPCKTCTTPAQGTSMFPSCCCTKPMDGNCTCIPIPSSWAFAKYLWEWASVRFSWLSLLVPFVQWFVGLSPTVWLSVIWMMWYWGPSLYNILSPFMPLLPIFFCLWVYI.

Met1 is subject to N-acetylmethionine. A lipid anchor (N-myristoyl glycine; by host) is attached at Gly2. The interval 2–108 (GTNLSVPNPL…PPLRDTHPQA (107 aa)) is pre-S1. The tract at residues 2 to 163 (GTNLSVPNPL…LSKTGDPVPN (162 aa)) is pre-S. At 2-170 (GTNLSVPNPL…VPNMENIASG (169 aa)) the chain is on the virion surface; in external conformation side. Residues 2-242 (GTNLSVPNPL…PGYRWMCLRR (241 aa)) are Intravirion; in internal conformation-facing. The tract at residues 73 to 107 (ILTSVPAAPPPASTNRQSGRQPTPLSPPLRDTHPQ) is disordered. The span at 85–95 (STNRQSGRQPT) shows a compositional bias: polar residues. Positions 109-163 (MQWNSTTFHQTLQDPRVRALYFPAGGSSSGTVSPAQNTVSAISSILSKTGDPVPN) are pre-S2. The helical transmembrane segment at 171–191 (LLGPLLVLQAGFFLLTKILTI) threads the bilayer. The Intravirion; in external conformation portion of the chain corresponds to 192–242 (PQSLDSWWTSLNFLGGTPVCLGQNSQSQISSHSPTCCPPICPGYRWMCLRR). A helical membrane pass occupies residues 243-263 (FIIFLCILLLCLIFLLVLLDY). Residues 264-337 (QGMLPVCPLI…WASVRFSWLS (74 aa)) lie on the Virion surface side of the membrane. N-linked (GlcNAc...) asparagine; by host glycosylation occurs at Asn309. A helical membrane pass occupies residues 338–358 (LLVPFVQWFVGLSPTVWLSVI). The Intravirion segment spans residues 359–364 (WMMWYW). A helical transmembrane segment spans residues 365-387 (GPSLYNILSPFMPLLPIFFCLWV). Residues 388–389 (YI) are Virion surface-facing.

The protein belongs to the orthohepadnavirus major surface antigen family. In terms of assembly, interacts (via its myristoylated pre-S1 region) with the host SLC10A1/NTCP; this interaction is essential for viral entry. As to quaternary structure, in its internal form (Li-HBsAg), interacts with the capsid protein and with the isoform S. Interacts with host chaperone CANX. Associates with host chaperone CANX through its pre-S2 N glycan; this association may be essential for isoform M proper secretion. In terms of assembly, interacts with isoform L. Interacts with the antigens of satellite virus HDV (HDVAgs); this interaction is required for encapsidation of HDV genomic RNA. Isoform M is N-terminally acetylated by host at a ratio of 90%, and N-glycosylated by host at the pre-S2 region. In terms of processing, myristoylated; this modification is essential for its interaction with the host protein SLC10A1/NTCP.

The protein localises to the virion membrane. Its function is as follows. The large envelope protein exists in two topological conformations, one which is termed 'external' or Le-HBsAg and the other 'internal' or Li-HBsAg. In its external conformation the protein attaches the virus to cell receptors and thereby initiating infection. This interaction determines the species specificity and liver tropism. This attachment induces virion internalization predominantly through caveolin-mediated endocytosis. The large envelope protein also assures fusion between virion membrane and endosomal membrane. In its internal conformation the protein plays a role in virion morphogenesis and mediates the contact with the nucleocapsid like a matrix protein. The middle envelope protein plays an important role in the budding of the virion. It is involved in the induction of budding in a nucleocapsid independent way. In this process the majority of envelope proteins bud to form subviral lipoprotein particles of 22 nm of diameter that do not contain a nucleocapsid. This is Large envelope protein from Hepatitis B virus genotype B1 subtype adw (isolate Japan/pJDW233/1988) (HBV-B).